The sequence spans 202 residues: Small ribosomal subunit protein uS4c (202 aa).

Positions 90–158 (MRSDNVIFRL…ISKNIELYQK (69 aa)) constitute an S4 RNA-binding domain.

Belongs to the universal ribosomal protein uS4 family. As to quaternary structure, part of the 30S ribosomal subunit. Contacts protein S5. The interaction surface between S4 and S5 is involved in control of translational fidelity.

It localises to the plastid. The protein resides in the chloroplast. Its function is as follows. One of the primary rRNA binding proteins, it binds directly to 16S rRNA where it nucleates assembly of the body of the 30S subunit. With S5 and S12 plays an important role in translational accuracy. The protein is Small ribosomal subunit protein uS4c (rps4) of Anthoceros punctatus (Hornwort).